We begin with the raw amino-acid sequence, 36 residues long: Alpha-amylase inhibitor AI-3688 (36 aa).

Cysteines 9 and 25 form a disulfide.

Inhibits mammalian alpha-amylases specifically but has no action on plant and microbial alpha-amylases. This Kitasatospora aureofaciens (Streptomyces aureofaciens) protein is Alpha-amylase inhibitor AI-3688.